The sequence spans 309 residues: Protein FdhE homolog (309 aa).

It belongs to the FdhE family.

The protein localises to the cytoplasm. Functionally, necessary for formate dehydrogenase activity. The polypeptide is Protein FdhE homolog (Yersinia enterocolitica serotype O:8 / biotype 1B (strain NCTC 13174 / 8081)).